The chain runs to 20 residues: Toxin b subunit beta (20 aa).

As to quaternary structure, toxin b is a heterodimer composed of toxin alpha and toxin beta. Expressed by the venom gland.

The protein localises to the secreted. Functionally, binds to sodium channels (Nav) and affects the channel activation process. The chain is Toxin b subunit beta from Androctonus crassicauda (Arabian fat-tailed scorpion).